The following is a 64-amino-acid chain: Large ribosomal subunit protein eL37 (64 aa).

The Zn(2+) site is built by Cys20, Cys23, Cys35, and Cys38. The C4-type zinc-finger motif lies at 20-38; that stretch reads CRRCGRRAYHVRKKACAAC.

The protein belongs to the eukaryotic ribosomal protein eL37 family. Zn(2+) serves as cofactor.

Functionally, binds to the 23S rRNA. The protein is Large ribosomal subunit protein eL37 of Methanococcus vannielii (strain ATCC 35089 / DSM 1224 / JCM 13029 / OCM 148 / SB).